The following is a 241-amino-acid chain: 1-(5-phosphoribosyl)-5-[(5-phosphoribosylamino)methylideneamino] imidazole-4-carboxamide isomerase (241 aa).

Asp8 acts as the Proton acceptor in catalysis. Residue Asp130 is the Proton donor of the active site.

It belongs to the HisA/HisF family.

It is found in the cytoplasm. The enzyme catalyses 1-(5-phospho-beta-D-ribosyl)-5-[(5-phospho-beta-D-ribosylamino)methylideneamino]imidazole-4-carboxamide = 5-[(5-phospho-1-deoxy-D-ribulos-1-ylimino)methylamino]-1-(5-phospho-beta-D-ribosyl)imidazole-4-carboxamide. The protein operates within amino-acid biosynthesis; L-histidine biosynthesis; L-histidine from 5-phospho-alpha-D-ribose 1-diphosphate: step 4/9. The chain is 1-(5-phosphoribosyl)-5-[(5-phosphoribosylamino)methylideneamino] imidazole-4-carboxamide isomerase from Flavobacterium psychrophilum (strain ATCC 49511 / DSM 21280 / CIP 103535 / JIP02/86).